A 182-amino-acid chain; its full sequence is RNA chaperone ProQ (182 aa).

A disordered region spans residues 125–160 (EQRKEQRKDFFKKKAREERNAKTMNKAVKKGSPKKD).

This sequence belongs to the ProQ family.

The protein localises to the cytoplasm. Functionally, RNA chaperone with significant RNA binding, RNA strand exchange and RNA duplexing activities. The sequence is that of RNA chaperone ProQ from Haemophilus ducreyi (strain 35000HP / ATCC 700724).